A 303-amino-acid chain; its full sequence is Monoglyceride lipase (303 aa).

T10 is modified (phosphothreonine). Y58 is modified (3'-nitrotyrosine). Residue S122 is the Nucleophile of the active site. Residues D239 and H269 each act as charge relay system in the active site.

This sequence belongs to the AB hydrolase superfamily. Monoacylglycerol lipase family. In terms of assembly, homodimer. Detected in adipose tissue, lung, liver, kidney, brain and heart.

It is found in the cytoplasm. The protein resides in the cytosol. The protein localises to the membrane. The catalysed reaction is Hydrolyzes glycerol monoesters of long-chain fatty acids.. The enzyme catalyses a 1-acylglycerol + H2O = glycerol + a fatty acid + H(+). It catalyses the reaction a 2-acylglycerol + H2O = glycerol + a fatty acid + H(+). It carries out the reaction 1-octanoylglycerol + H2O = octanoate + glycerol + H(+). The catalysed reaction is 2-(5Z,8Z,11Z,14Z-eicosatetraenoyl)-glycerol + H2O = glycerol + (5Z,8Z,11Z,14Z)-eicosatetraenoate + H(+). The enzyme catalyses 1-decanoylglycerol + H2O = decanoate + glycerol + H(+). It catalyses the reaction 1-dodecanoylglycerol + H2O = dodecanoate + glycerol + H(+). It carries out the reaction 1-tetradecanoylglycerol + H2O = tetradecanoate + glycerol + H(+). The catalysed reaction is 2-hexadecanoylglycerol + H2O = glycerol + hexadecanoate + H(+). The enzyme catalyses 1-(9Z-octadecenoyl)-glycerol + H2O = glycerol + (9Z)-octadecenoate + H(+). It catalyses the reaction 2-(9Z-octadecenoyl)-glycerol + H2O = glycerol + (9Z)-octadecenoate + H(+). It carries out the reaction 2-(9Z,12Z-octadecadienoyl)-glycerol + H2O = (9Z,12Z)-octadecadienoate + glycerol + H(+). The catalysed reaction is 1-(5Z,8Z,11Z,14Z-eicosatetraenoyl)-glycerol + H2O = glycerol + (5Z,8Z,11Z,14Z)-eicosatetraenoate + H(+). The enzyme catalyses 1-(9Z,12Z-octadecadienoyl)-glycerol + H2O = (9Z,12Z)-octadecadienoate + glycerol + H(+). It catalyses the reaction 1-hexadecanoylglycerol + H2O = glycerol + hexadecanoate + H(+). It carries out the reaction 1-octadecanoylglycerol + H2O = octadecanoate + glycerol + H(+). The catalysed reaction is prostaglandin E2 1-glyceryl ester + H2O = prostaglandin E2 + glycerol + H(+). The enzyme catalyses prostaglandin D2-1-glycerol ester + H2O = prostaglandin D2 + glycerol + H(+). It catalyses the reaction 2-glyceryl-15-deoxy-Delta(12,14)-prostaglandin J2 + H2O = 15-deoxy-Delta(12,14)-prostaglandin J2 + glycerol + H(+). It carries out the reaction prostaglandin F2alpha 1-glyceryl ester + H2O = prostaglandin F2alpha + glycerol + H(+). It functions in the pathway glycerolipid metabolism; triacylglycerol degradation. Converts monoacylglycerides to free fatty acids and glycerol. Hydrolyzes the endocannabinoid 2-arachidonoylglycerol, and thereby contributes to the regulation of endocannabinoid signaling, nociperception and perception of pain. Regulates the levels of fatty acids that serve as signaling molecules and promote cancer cell migration, invasion and tumor growth. This Homo sapiens (Human) protein is Monoglyceride lipase.